A 600-amino-acid polypeptide reads, in one-letter code: Aspartate--tRNA(Asp/Asn) ligase (600 aa).

E187 is a binding site for L-aspartate. Positions 211 to 214 are aspartate; the sequence is QIFK. R233 and H463 together coordinate L-aspartate. 233–235 contributes to the ATP binding site; the sequence is RDE. Residue E497 coordinates ATP. R504 lines the L-aspartate pocket. 549–552 is a binding site for ATP; it reads GVDR.

Belongs to the class-II aminoacyl-tRNA synthetase family. Type 1 subfamily. As to quaternary structure, homodimer.

Its subcellular location is the cytoplasm. It catalyses the reaction tRNA(Asx) + L-aspartate + ATP = L-aspartyl-tRNA(Asx) + AMP + diphosphate. Aspartyl-tRNA synthetase with relaxed tRNA specificity since it is able to aspartylate not only its cognate tRNA(Asp) but also tRNA(Asn). Reaction proceeds in two steps: L-aspartate is first activated by ATP to form Asp-AMP and then transferred to the acceptor end of tRNA(Asp/Asn). The sequence is that of Aspartate--tRNA(Asp/Asn) ligase from Wolbachia sp. subsp. Drosophila simulans (strain wRi).